Reading from the N-terminus, the 71-residue chain is Large ribosomal subunit protein uL29 (71 aa).

Belongs to the universal ribosomal protein uL29 family.

The chain is Large ribosomal subunit protein uL29 (rpl29) from Halobacterium salinarum (strain ATCC 700922 / JCM 11081 / NRC-1) (Halobacterium halobium).